Here is a 912-residue protein sequence, read N- to C-terminus: WD repeat-containing protein 44 (912 aa).

The span at 1–14 (MASESDTEEFFDAP) shows a compositional bias: acidic residues. Positions 1–25 (MASESDTEEFFDAPEDVHLEGGDPI) are disordered. Position 2 is an N-acetylalanine (A2). Residues 2–170 (ASESDTEEFF…SSTAQLNVPE (169 aa)) are binding activity. S3 carries the phosphoserine modification. Residues 9–15 (EFFDAPE) carry the FFAT-like motif motif. A phosphoserine mark is found at S50, S66, S71, S81, S96, and S126. 2 disordered regions span residues 79–104 (DDSLDSKGKGQSDQATASPVTAGTEL) and 118–152 (QEDSQKAESQDVSEETELESKQCFPSDDTCEKPVD). Residues 89–104 (QSDQATASPVTAGTEL) are compositionally biased toward polar residues. T158 carries the phosphothreonine modification. 5 disordered regions span residues 183–202 (VKESDVLESASSHSLSTKDF), 207–279 (EVAP…PKEN), 318–349 (QENGKAPDGQTIAGEVMGPQRPRSNSGRELTD), 396–422 (SNDAAQSDDEEKLQSQQTDTDGGRLKQ), and 457–479 (RDEVFHTDQDDPSSSDDEGMPYT). The segment at 210 to 256 (PAKPPRQLTPEPDIVASTKKPVPARPPPPANFPPPRPPPPSRPAPPP) is important for interaction with ARHGAP26 AND ARHGAP10. T218 carries the phosphothreonine modification. The segment covering 232–255 (PARPPPPANFPPPRPPPPSRPAPP) has biased composition (pro residues). S261 is modified (phosphoserine). The span at 261-277 (SELEFEALKTPDLDVPK) shows a compositional bias: basic and acidic residues. T270 is modified (phosphothreonine). The tract at residues 333-346 (VMGPQRPRSNSGRE) is important for interaction with RAB11A. The segment at 334–504 (MGPQRPRSNS…DFDQIKVVQD (171 aa)) is interaction with RAB11. Phosphoserine occurs at positions 341 and 343. Residue T348 is modified to Phosphothreonine. S402, S469, S470, and S471 each carry phosphoserine. Residues 466–475 (DDPSSSDDEG) are compositionally biased toward acidic residues. A Phosphotyrosine modification is found at Y478. One copy of the WD 1 repeat lies at 508–547 (EHMGAVWTMKFSHCGRLLASAGQDNVVRIWALKNAFDYFN). Residues 556 to 592 (EGRVSPSPSQESLNSSKSDTDTGVCSGTDEDPDDKNA) are disordered. Residues S560 and S564 each carry the phosphoserine modification. Over residues 560–572 (SPSPSQESLNSSK) the composition is skewed to low complexity. 6 WD repeats span residues 604 to 642 (GHTADLLDLSWSKNYFLLSSSMDKTVRLWHISRRECLCC), 644 to 684 (QHID…VALW), 689 to 728 (GQTKLITAANFCQNGKYAVIGTYDGRCIFYDTEHLKYHTQ), 739 to 778 (KVGRKITGIEPLPGENKILVTSNDSRIRLYDLRDLSLSMK), 783 to 822 (VNSSSQIKASFSHDFNYLVSGSEDKYVYIWSTYHDLSKFT), and 871 to 912 (EDAE…KNLS).

Interacts with the GTP-bound form of RAB11A when membrane-associated. Interacts with GRAF1/ARHGAP26 or GRAF2/ARHGAP10; the interaction connects the endoplasmic reticulum (ER) with the endosomal tubule. Interacts (via FFAT-like motif) with VAPA (via MSP domain) or VAPB (via MSP domain); the interaction connects the ER with the endosomal tubule. Does not bind to other Rab and Rho small G proteins. Phosphorylated by ATK1; the phosphorylation stabilizes its interaction with RAB11A and RAB11B. In terms of tissue distribution, highly expressed in brain.

The protein resides in the cytoplasm. It localises to the cytosol. Its subcellular location is the perinuclear region. It is found in the endosome membrane. The protein localises to the golgi apparatus. The protein resides in the trans-Golgi network. Functionally, downstream effector for Rab11 which regulates Rab11 intracellular membrane trafficking functions such as endocytic recycling, intracellular ciliogenesis and protein export. ATK1-mediated phosphorylation of WDR44 induces binding to Rab11 which activates endocytic recycling of transferrin receptor back to the plasma membrane. When bound to Rab11, prevents the formation of the ciliogenic Rab11-Rabin8/RAB3IP-RAB11FIP3 complex, therefore inhibiting preciliary trafficking and ciliogenesis. Participates in neo-synthesized protein export by connecting the endoplasmic reticulum (ER) with the endosomal tubule via direct interactions with the integral ER proteins VAPA or VAPB and the endosomal protein GRAFs (GRAF1/ARHGAP26 or GRAF2/ARHGAP10), which facilitates the transfer of proteins such as E-cadherin, MPP14 and CFTR into a Rab8-Rab10-Rab11-dependent export route. In Bos taurus (Bovine), this protein is WD repeat-containing protein 44 (WDR44).